A 199-amino-acid polypeptide reads, in one-letter code: GTP cyclohydrolase-2 (199 aa).

50–54 (RIHSE) is a GTP binding site. Residues Cys-55, Cys-66, and Cys-68 each coordinate Zn(2+). GTP contacts are provided by residues Gln-71, 93-95 (EGR), and Thr-115. Residue Asp-127 is the Proton acceptor of the active site. Residue Arg-129 is the Nucleophile of the active site. 2 residues coordinate GTP: Thr-150 and Lys-155.

This sequence belongs to the GTP cyclohydrolase II family. Homodimer. Requires Zn(2+) as cofactor.

It carries out the reaction GTP + 4 H2O = 2,5-diamino-6-hydroxy-4-(5-phosphoribosylamino)-pyrimidine + formate + 2 phosphate + 3 H(+). It participates in cofactor biosynthesis; riboflavin biosynthesis; 5-amino-6-(D-ribitylamino)uracil from GTP: step 1/4. In terms of biological role, catalyzes the conversion of GTP to 2,5-diamino-6-ribosylamino-4(3H)-pyrimidinone 5'-phosphate (DARP), formate and pyrophosphate. The chain is GTP cyclohydrolase-2 from Buchnera aphidicola subsp. Baizongia pistaciae (strain Bp).